The following is a 410-amino-acid chain: Phosphoglycerate kinase (410 aa).

Residues 19–21 (DLN), Arg34, 57–60 (HQGK), Arg114, and Arg154 each bind substrate. Residues Glu332 and 358–361 (GGHS) each bind ATP.

Belongs to the phosphoglycerate kinase family. As to quaternary structure, homodimer.

Its subcellular location is the cytoplasm. The enzyme catalyses (2R)-3-phosphoglycerate + ATP = (2R)-3-phospho-glyceroyl phosphate + ADP. It participates in carbohydrate degradation; glycolysis; pyruvate from D-glyceraldehyde 3-phosphate: step 2/5. The protein is Phosphoglycerate kinase (pgk) of Pyrococcus furiosus (strain ATCC 43587 / DSM 3638 / JCM 8422 / Vc1).